Consider the following 618-residue polypeptide: 1-aminocyclopropane-1-carboxylate synthase-like protein 1 (618 aa).

Positions 11 to 26 (QGTQTPAAQTTCAPST) are enriched in low complexity. The interval 11-54 (QGTQTPAAQTTCAPSTMSSSSRPPLETLQAQSVSADETPGSALP) is disordered. Over residues 27 to 45 (MSSSSRPPLETLQAQSVSA) the composition is skewed to polar residues. Residue E122 coordinates substrate. K340 is subject to N6-(pyridoxal phosphate)lysine.

The protein belongs to the class-I pyridoxal-phosphate-dependent aminotransferase family.

This Takifugu rubripes (Japanese pufferfish) protein is 1-aminocyclopropane-1-carboxylate synthase-like protein 1 (accs).